Here is a 488-residue protein sequence, read N- to C-terminus: Ribosomal protein uS12 methylthiotransferase RimO (488 aa).

The MTTase N-terminal domain occupies 4-120 (RKVHFVSLGC…LGRVLAGDAE (117 aa)). Positions 13, 49, 83, 155, 159, and 162 each coordinate [4Fe-4S] cluster. A Radical SAM core domain is found at 141-377 (STPGGSAYVK…MTLQRRISHK (237 aa)). The 69-residue stretch at 380 to 448 (AAMIGRELEV…DYDLVGELLD (69 aa)) folds into the TRAM domain.

The protein belongs to the methylthiotransferase family. RimO subfamily. [4Fe-4S] cluster serves as cofactor.

Its subcellular location is the cytoplasm. The enzyme catalyses L-aspartate(89)-[ribosomal protein uS12]-hydrogen + (sulfur carrier)-SH + AH2 + 2 S-adenosyl-L-methionine = 3-methylsulfanyl-L-aspartate(89)-[ribosomal protein uS12]-hydrogen + (sulfur carrier)-H + 5'-deoxyadenosine + L-methionine + A + S-adenosyl-L-homocysteine + 2 H(+). Catalyzes the methylthiolation of an aspartic acid residue of ribosomal protein uS12. The sequence is that of Ribosomal protein uS12 methylthiotransferase RimO from Sorangium cellulosum (strain So ce56) (Polyangium cellulosum (strain So ce56)).